A 603-amino-acid polypeptide reads, in one-letter code: Aspartate--tRNA(Asp/Asn) ligase (603 aa).

Residue Glu187 participates in L-aspartate binding. The tract at residues 211–214 (QQFK) is aspartate. Residues Arg233 and His461 each contribute to the L-aspartate site. Residue 233-235 (RDE) participates in ATP binding. Glu495 contributes to the ATP binding site. An L-aspartate-binding site is contributed by Arg502. Residue 547–550 (GLDR) participates in ATP binding.

It belongs to the class-II aminoacyl-tRNA synthetase family. Type 1 subfamily. In terms of assembly, homodimer.

The protein localises to the cytoplasm. It carries out the reaction tRNA(Asx) + L-aspartate + ATP = L-aspartyl-tRNA(Asx) + AMP + diphosphate. Functionally, aspartyl-tRNA synthetase with relaxed tRNA specificity since it is able to aspartylate not only its cognate tRNA(Asp) but also tRNA(Asn). Reaction proceeds in two steps: L-aspartate is first activated by ATP to form Asp-AMP and then transferred to the acceptor end of tRNA(Asp/Asn). The sequence is that of Aspartate--tRNA(Asp/Asn) ligase from Chlorobaculum parvum (strain DSM 263 / NCIMB 8327) (Chlorobium vibrioforme subsp. thiosulfatophilum).